Here is a 517-residue protein sequence, read N- to C-terminus: Glutamate--tRNA ligase (517 aa).

The 'HIGH' region signature appears at 10 to 20 (PSPSGFLHVGG). Positions 107, 109, 134, and 136 each coordinate Zn(2+). The 'KMSKS' region signature appears at 250–254 (KLSKR). An ATP-binding site is contributed by lysine 253.

Belongs to the class-I aminoacyl-tRNA synthetase family. Glutamate--tRNA ligase type 1 subfamily. Monomer. The cofactor is Zn(2+).

It is found in the cytoplasm. It carries out the reaction tRNA(Glu) + L-glutamate + ATP = L-glutamyl-tRNA(Glu) + AMP + diphosphate. Catalyzes the attachment of glutamate to tRNA(Glu) in a two-step reaction: glutamate is first activated by ATP to form Glu-AMP and then transferred to the acceptor end of tRNA(Glu). In Leptospira biflexa serovar Patoc (strain Patoc 1 / ATCC 23582 / Paris), this protein is Glutamate--tRNA ligase.